The chain runs to 473 residues: Photosystem II CP43 reaction center protein (473 aa).

The propeptide occupies Met1–Glu14. An N-acetylthreonine modification is found at Thr15. Thr15 carries the phosphothreonine modification. 5 helical membrane passes run Leu69–Ala93, Leu134–Asn155, Lys178–Thr200, Lys255–Ser275, and Trp291–Ala312. Glu367 contacts [CaMn4O5] cluster. A helical transmembrane segment spans residues Arg447–Pro471.

Belongs to the PsbB/PsbC family. PsbC subfamily. In terms of assembly, PSII is composed of 1 copy each of membrane proteins PsbA, PsbB, PsbC, PsbD, PsbE, PsbF, PsbH, PsbI, PsbJ, PsbK, PsbL, PsbM, PsbT, PsbX, PsbY, PsbZ, Psb30/Ycf12, at least 3 peripheral proteins of the oxygen-evolving complex and a large number of cofactors. It forms dimeric complexes. It depends on Binds multiple chlorophylls and provides some of the ligands for the Ca-4Mn-5O cluster of the oxygen-evolving complex. It may also provide a ligand for a Cl- that is required for oxygen evolution. PSII binds additional chlorophylls, carotenoids and specific lipids. as a cofactor.

It localises to the plastid. Its subcellular location is the chloroplast thylakoid membrane. Its function is as follows. One of the components of the core complex of photosystem II (PSII). It binds chlorophyll and helps catalyze the primary light-induced photochemical processes of PSII. PSII is a light-driven water:plastoquinone oxidoreductase, using light energy to abstract electrons from H(2)O, generating O(2) and a proton gradient subsequently used for ATP formation. This is Photosystem II CP43 reaction center protein from Amborella trichopoda.